The sequence spans 268 residues: UPF0739 protein C1orf74 homolog (268 aa).

Belongs to the UPF0739 family.

In Salmo salar (Atlantic salmon), this protein is UPF0739 protein C1orf74 homolog.